Reading from the N-terminus, the 284-residue chain is Serine/threonine-protein phosphatase Pgam5, mitochondrial (284 aa).

The helical transmembrane segment at 8 to 24 threads the bilayer; sequence LGVPTATLAVGTLLLGD.

Belongs to the phosphoglycerate mutase family. BPG-dependent PGAM subfamily. Interacts with skn-1 isoforms a and c.

The protein localises to the mitochondrion outer membrane. It carries out the reaction O-phospho-L-seryl-[protein] + H2O = L-seryl-[protein] + phosphate. The catalysed reaction is O-phospho-L-threonyl-[protein] + H2O = L-threonyl-[protein] + phosphate. Displays phosphatase activity for serine/threonine residues. Has apparently no phosphoglycerate mutase activity. The chain is Serine/threonine-protein phosphatase Pgam5, mitochondrial (pgam-5) from Caenorhabditis elegans.